Reading from the N-terminus, the 181-residue chain is Oligoribonuclease (181 aa).

The Exonuclease domain occupies 8 to 171 (LIWVDLEMTG…DDIRESIAEL (164 aa)). The active site involves Tyr129.

The protein belongs to the oligoribonuclease family.

Its subcellular location is the cytoplasm. In terms of biological role, 3'-to-5' exoribonuclease specific for small oligoribonucleotides. The sequence is that of Oligoribonuclease from Aliivibrio fischeri (strain ATCC 700601 / ES114) (Vibrio fischeri).